The primary structure comprises 400 residues: Queuine tRNA-ribosyltransferase (400 aa).

The active-site Proton acceptor is the Asp-93. Substrate-binding positions include 93 to 97, Asp-166, and Gly-247; that span reads DSGGF. An RNA binding region spans residues 277–283; it reads GIGDVDD. Catalysis depends on Asp-296, which acts as the Nucleophile. The tract at residues 301 to 305 is RNA binding; important for wobble base 34 recognition; it reads TRLGR. Residues Cys-338, Cys-340, Cys-343, and His-369 each coordinate Zn(2+).

Belongs to the queuine tRNA-ribosyltransferase family. Homodimer. Within each dimer, one monomer is responsible for RNA recognition and catalysis, while the other monomer binds to the replacement base PreQ1. It depends on Zn(2+) as a cofactor.

It catalyses the reaction 7-aminomethyl-7-carbaguanine + guanosine(34) in tRNA = 7-aminomethyl-7-carbaguanosine(34) in tRNA + guanine. Its pathway is tRNA modification; tRNA-queuosine biosynthesis. Its function is as follows. Catalyzes the base-exchange of a guanine (G) residue with the queuine precursor 7-aminomethyl-7-deazaguanine (PreQ1) at position 34 (anticodon wobble position) in tRNAs with GU(N) anticodons (tRNA-Asp, -Asn, -His and -Tyr). Catalysis occurs through a double-displacement mechanism. The nucleophile active site attacks the C1' of nucleotide 34 to detach the guanine base from the RNA, forming a covalent enzyme-RNA intermediate. The proton acceptor active site deprotonates the incoming PreQ1, allowing a nucleophilic attack on the C1' of the ribose to form the product. After dissociation, two additional enzymatic reactions on the tRNA convert PreQ1 to queuine (Q), resulting in the hypermodified nucleoside queuosine (7-(((4,5-cis-dihydroxy-2-cyclopenten-1-yl)amino)methyl)-7-deazaguanosine). The chain is Queuine tRNA-ribosyltransferase from Roseiflexus sp. (strain RS-1).